The following is an 875-amino-acid chain: uncharacterized protein (875 aa).

This is an uncharacterized protein from Mycobacterium bovis (strain ATCC BAA-935 / AF2122/97).